Here is a 277-residue protein sequence, read N- to C-terminus: Short chain dehydrogenase penD (277 aa).

NADP(+) contacts are provided by Ile-28, Asp-76, and Asn-105. Catalysis depends on proton donor residues Ser-158 and Ser-159. 3 residues coordinate NADP(+): Tyr-173, Lys-177, and Thr-209. Catalysis depends on Tyr-173, which acts as the Proton acceptor. The active-site Lowers pKa of active site Tyr is the Lys-177.

The protein belongs to the short-chain dehydrogenases/reductases (SDR) family.

The catalysed reaction is yaequinolone D + NADPH + H(+) = penigequinolone A + NADP(+) + H2O. It catalyses the reaction yaequinolone D + NADPH + H(+) = penigequinolone B + NADP(+) + H2O. It functions in the pathway secondary metabolite biosynthesis. Its pathway is alkaloid biosynthesis. The protein operates within mycotoxin biosynthesis. Short chain dehydrogenase; part of the gene cluster that mediates the biosynthesis of penigequinolones, potent insecticidal alkaloids that contain a highly modified 10-carbon prenyl group. The first stage is catalyzed by the nonribosomal peptide synthetase penN that condenses anthranilic acid and O-methyl-L-tyrosine to produce 4'-methoxycyclopeptin. 4'-methoxycyclopeptin is then converted to 4'-methoxydehydrocyclopeptin by the ketoglutarate-dependent dioxygenase penM through dehydrogenation to form a double bond between C-alpha and C-beta of the O-methyltyrosine side chain. PenM also converts its first product methoxydehydrocyclopeptin to 4'-methoxycyclopenin. The following conversion of 4'methoxycyclopenin into 4'-methoxyviridicatin is catalyzed by the cyclopenase penL. 4'-methoxyviridicatin is the precursor of quinolone natural products, and is further converted to quinolinone B. The prenyltransferase penI then catalyzes the canonical Friedel-Crafts alkylation of quinolinone B with dimethylallyl cation to yield dimethylallyl quinolone, which is subjected to FAD-dependent dehydrogenation by the FAD-linked oxidoreductase penH to yield conjugated aryl diene. The delta(3') double bond then serves as the site of the second alkylation with DMAPP catalyzed by the prenyltransferase penG to yield a carbenium ion intermediate, which can be attacked by H(2)O to yield a styrenyl quinolone containing a C3'-hydroxyprenyl chain, or undergo cyclization to yield yaequinolones J1 and J2. The conversion of the styrenyl quinolone into the tetrahydrofuran-containing yaequinolone C is performed by the FAD-dependent monooxygenase penE and involves epoxidation of the terminal C7'-C8' olefin, followed by epoxide ring opening initiated by the C3' hydroxyl group. The predicted cysteine hydrolase penJ acts as an epoxide hydrolase that enhances the rate of the 5-exo-tet cyclization step, increasing the yield of yaequinolone C. PenF catalyzes the cationic rearrangement of the epoxide formed by penE (before ring opening to produce yaequinolone C) into yaequinolone D. Finally, the short-chain dehydrogenase/reductase (SDR)-like reductase penD, catalyzes both the dehydration of yaequinolone D and the reduction of the resulting oxonium to yield penigequinolone. This Penicillium thymicola protein is Short chain dehydrogenase penD.